The primary structure comprises 326 residues: UDP-N-acetylglucosamine transporter (326 aa).

8 consecutive transmembrane segments (helical) span residues 4-24 (NLKYLSLGILVFQTTSLVLTM), 38-58 (LSSTAVVVAEFLKIMACIFLV), 136-156 (LGVYQWLSLVILMAGVAFVQW), 174-194 (FVGLMAVLTACFSSGFAGVYF), 212-232 (LGFFGSIFGLMGVYVYDGELV), 243-263 (QLTWIVVALQALGGLVIAAVI), 269-289 (ILKGFATSLSIILSTIISYFW), and 293-313 (FVPTSVFFLGAILVIAATFLY).

Belongs to the nucleotide-sugar transporter family. SLC35A subfamily. In terms of assembly, interacts with SLC35A2; the interaction is reduced in the presence of SLC35A4. Found in a complex with SLC35A2 and SLC35A4. Interacts with MGAT4B. In terms of processing, O-Glcnacylation regulates the stability of SLC35A3 and the specific complex formation with MGAT4B.

It is found in the golgi apparatus membrane. The catalysed reaction is UMP(out) + UDP-N-acetyl-alpha-D-glucosamine(in) = UMP(in) + UDP-N-acetyl-alpha-D-glucosamine(out). Its function is as follows. Transports diphosphate-N-acetylglucosamine (UDP-GlcNAc) from the cytosol into the lumen of the Golgi apparatus, functioning as an antiporter that exchanges UDP-N-acetyl-alpha-D-glucosamine for UMP. May supply UDP-GlcNAc as substrate for Golgi-resident glycosyltransferases that generate highly branched, multiantennary complex N-glycans and keratan sulfate. However, the exact role of SLC35A3 still needs to be elucidated, it could be a member of a catalytically more efficient multiprotein complex rather than function independently as a single transporter. The sequence is that of UDP-N-acetylglucosamine transporter (Slc35a3) from Mus musculus (Mouse).